The sequence spans 462 residues: Nuclear factor interleukin-3-regulated protein (462 aa).

Lys24 participates in a covalent cross-link: Glycyl lysine isopeptide (Lys-Gly) (interchain with G-Cter in SUMO2). In terms of domain architecture, bZIP spans 73-136 (DAMYWEKRRK…GLISSTAYAQ (64 aa)). The basic motif stretch occupies residues 79–95 (KRRKNNEAAKRSREKRR). Residues 99 to 106 (LVLENKLI) form a leucine-zipper region. Disordered regions lie at residues 189–237 (DVSE…DDRG) and 258–302 (SPPL…IHSP). Residues 201 to 210 (ESSVQGSCRS) are compositionally biased toward polar residues. Residue Lys214 forms a Glycyl lysine isopeptide (Lys-Gly) (interchain with G-Cter in SUMO2) linkage. Lys219 is covalently cross-linked (Glycyl lysine isopeptide (Lys-Gly) (interchain with G-Cter in SUMO1); alternate). Residue Lys219 forms a Glycyl lysine isopeptide (Lys-Gly) (interchain with G-Cter in SUMO2); alternate linkage. Residues 227–237 (SYTREPRDDRG) show a composition bias toward basic and acidic residues. Over residues 264–274 (VNRSSSNSPRT) the composition is skewed to polar residues. The segment at 299-363 (IHSPVELKHV…PIDMTSKRHF (65 aa)) is necessary for transcriptional repression and sufficient for interaction with DR1. Ser301 is subject to Phosphoserine. Glycyl lysine isopeptide (Lys-Gly) (interchain with G-Cter in SUMO2) cross-links involve residues Lys306, Lys314, Lys326, Lys332, Lys337, and Lys350. Ser353 carries the post-translational modification Phosphoserine. Glycyl lysine isopeptide (Lys-Gly) (interchain with G-Cter in SUMO2) cross-links involve residues Lys360, Lys394, Lys401, Lys406, Lys412, Lys419, Lys424, Lys434, and Lys448.

The protein belongs to the bZIP family. NFIL3 subfamily. Homodimer. Binds DNA as a dimer. Interacts with DR1. Interacts with PER2 and CRY2. Interacts with NR0B2. Interacts with MYSM1. Expressed in bladder stomach, thyroid, spinal cord, lymph node, trachea, adrenal gland, bone marrow and muscle.

The protein resides in the nucleus. Acts as a transcriptional regulator that recognizes and binds to the sequence 5'-[GA]TTA[CT]GTAA[CT]-3', a sequence present in many cellular and viral promoters. Represses transcription from promoters with activating transcription factor (ATF) sites. Represses promoter activity in osteoblasts. Represses transcriptional activity of PER1. Represses transcriptional activity of PER2 via the B-site on the promoter. Activates transcription from the interleukin-3 promoter in T-cells. Competes for the same consensus-binding site with PAR DNA-binding factors (DBP, HLF and TEF). Component of the circadian clock that acts as a negative regulator for the circadian expression of PER2 oscillation in the cell-autonomous core clock. Protects pro-B cells from programmed cell death. Represses the transcription of CYP2A5. Positively regulates the expression and activity of CES2 by antagonizing the repressive action of NR1D1 on CES2. Required for the development of natural killer cell precursors. The chain is Nuclear factor interleukin-3-regulated protein (NFIL3) from Homo sapiens (Human).